The following is a 550-amino-acid chain: Membrane protein insertase YidC (550 aa).

The chain crosses the membrane as a helical span at residues 6–26 (LIVFIVLSFGLLFVWQEYFAP). A disordered region spans residues 30-59 (PKPVAAAVQPDGTPAPATARPADSPATGKL). The next 4 helical transmembrane spans lie at 360 to 380 (WGWAIVLLTVLVKAAFYPLSA), 430 to 450 (LPIVVQIPVFIGLYWALLASV), 472 to 492 (ILPALMAATMYLQTFLNPPPA), and 504 to 524 (PLAFSVMFFFFPAGLVLYWLV).

The protein belongs to the OXA1/ALB3/YidC family. Type 1 subfamily. In terms of assembly, interacts with the Sec translocase complex via SecD. Specifically interacts with transmembrane segments of nascent integral membrane proteins during membrane integration.

The protein localises to the cell inner membrane. Required for the insertion and/or proper folding and/or complex formation of integral membrane proteins into the membrane. Involved in integration of membrane proteins that insert both dependently and independently of the Sec translocase complex, as well as at least some lipoproteins. Aids folding of multispanning membrane proteins. This is Membrane protein insertase YidC from Laribacter hongkongensis (strain HLHK9).